The chain runs to 254 residues: Triosephosphate isomerase (254 aa).

12–14 serves as a coordination point for substrate; it reads NWK. Residue His-99 is the Electrophile of the active site. Residue Glu-169 is the Proton acceptor of the active site. Residues Gly-175, Ser-214, and 235–236 contribute to the substrate site; that span reads GG.

This sequence belongs to the triosephosphate isomerase family. Homodimer.

It localises to the cytoplasm. It carries out the reaction D-glyceraldehyde 3-phosphate = dihydroxyacetone phosphate. The protein operates within carbohydrate biosynthesis; gluconeogenesis. It functions in the pathway carbohydrate degradation; glycolysis; D-glyceraldehyde 3-phosphate from glycerone phosphate: step 1/1. Functionally, involved in the gluconeogenesis. Catalyzes stereospecifically the conversion of dihydroxyacetone phosphate (DHAP) to D-glyceraldehyde-3-phosphate (G3P). In Bartonella tribocorum (strain CIP 105476 / IBS 506), this protein is Triosephosphate isomerase.